Consider the following 616-residue polypeptide: 2-isopropylmalate synthase (616 aa).

The segment at 1–34 is disordered; it reads MSPNDAFISAPAKIETPVGPRNEGQPAWNKQRGS. The 275-residue stretch at 67–341 folds into the Pyruvate carboxyltransferase domain; that stretch reads PQWCAVDLRD…DPQLDFTDIR (275 aa). Mg(2+) contacts are provided by aspartate 76, histidine 280, histidine 282, and asparagine 316. The interval 490–616 is regulatory domain; the sequence is RTAPVEQIAL…NHEAVLAGGV (127 aa).

It belongs to the alpha-IPM synthase/homocitrate synthase family. LeuA type 2 subfamily. In terms of assembly, homodimer. The cofactor is Mg(2+).

It is found in the cytoplasm. It carries out the reaction 3-methyl-2-oxobutanoate + acetyl-CoA + H2O = (2S)-2-isopropylmalate + CoA + H(+). It participates in amino-acid biosynthesis; L-leucine biosynthesis; L-leucine from 3-methyl-2-oxobutanoate: step 1/4. Inhibited by L-leucine, the pathway end product. Its function is as follows. Catalyzes the condensation of the acetyl group of acetyl-CoA with 3-methyl-2-oxobutanoate (2-ketoisovalerate) to form 3-carboxy-3-hydroxy-4-methylpentanoate (2-isopropylmalate). Complements an E.coli leuA deletion. In Corynebacterium glutamicum (strain ATCC 13032 / DSM 20300 / JCM 1318 / BCRC 11384 / CCUG 27702 / LMG 3730 / NBRC 12168 / NCIMB 10025 / NRRL B-2784 / 534), this protein is 2-isopropylmalate synthase.